The following is a 211-amino-acid chain: Ribosomal RNA large subunit methyltransferase E (211 aa).

S-adenosyl-L-methionine contacts are provided by Gly55, Trp57, Asp75, Asp93, and Asp117. Lys157 functions as the Proton acceptor in the catalytic mechanism.

Belongs to the class I-like SAM-binding methyltransferase superfamily. RNA methyltransferase RlmE family.

It is found in the cytoplasm. It carries out the reaction uridine(2552) in 23S rRNA + S-adenosyl-L-methionine = 2'-O-methyluridine(2552) in 23S rRNA + S-adenosyl-L-homocysteine + H(+). Functionally, specifically methylates the uridine in position 2552 of 23S rRNA at the 2'-O position of the ribose in the fully assembled 50S ribosomal subunit. The sequence is that of Ribosomal RNA large subunit methyltransferase E from Methanothermobacter thermautotrophicus (strain ATCC 29096 / DSM 1053 / JCM 10044 / NBRC 100330 / Delta H) (Methanobacterium thermoautotrophicum).